A 347-amino-acid polypeptide reads, in one-letter code: Nod factor export ATP-binding protein I (347 aa).

The segment covering 1–11 (MGENMEREMLR) has biased composition (basic and acidic residues). A disordered region spans residues 1 to 32 (MGENMEREMLRPKTIAMDQNSASARSNPEREI). A compositionally biased stretch (polar residues) spans 17 to 26 (MDQNSASARS). Residues 49–279 (IDLQAVTMIY…IIGCPVIEVY (231 aa)) form the ABC transporter domain. Residue 81–88 (GPNGAGKS) coordinates ATP.

Belongs to the ABC transporter superfamily. Lipooligosaccharide exporter (TC 3.A.1.102) family. In terms of assembly, the complex is composed of two ATP-binding proteins (NodI) and two transmembrane proteins (NodJ).

The protein localises to the cell inner membrane. Its function is as follows. Part of the ABC transporter complex NodIJ involved in the export of the nodulation factors (Nod factors), the bacterial signal molecules that induce symbiosis and subsequent nodulation induction. Nod factors are LCO (lipo-chitin oligosaccharide), a modified beta-1,4-linked N-acetylglucosamine oligosaccharide. This subunit is responsible for energy coupling to the transport system. The sequence is that of Nod factor export ATP-binding protein I from Neorhizobium galegae (Rhizobium galegae).